A 1111-amino-acid polypeptide reads, in one-letter code: Protein NETWORKED 1C (1111 aa).

Residues 13–93 (YSWWWDSHNT…ERYNHATGVI (81 aa)) enclose the NAB domain. 3 coiled-coil regions span residues 202-287 (SESE…KESS), 314-605 (ERAS…LISE), and 642-752 (KTIG…LESK). Residues 850–870 (TGGGRSMRKQDGGSGRMRKQS) are disordered. The stretch at 943–1009 (NREVNKRRVL…EGEEAIEKLF (67 aa)) forms a coiled coil.

This sequence belongs to the NET family.

Its function is as follows. Plant-specific actin binding protein. May be part of a membrane-cytoskeletal adapter complex. The chain is Protein NETWORKED 1C from Arabidopsis thaliana (Mouse-ear cress).